Here is a 630-residue protein sequence, read N- to C-terminus: Putative adenylate cyclase regulatory protein (630 aa).

Residues 10–46 (CAVCREPWAEGALELFPCRHVFCTVCVVERWRCPSCQ) form an RING-type zinc finger. 18 LRR repeats span residues 184–206 (FLVH…CRLK), 207–230 (TLEA…CALP), 231–251 (QLTS…RCIH), 255–277 (KLKV…GGMR), 278–301 (SLEK…CKFS), 302–324 (NLRE…KNLI), 325–347 (NLKV…ERLV), 348–370 (NLDK…ANLS), 371–393 (NLKE…QDLN), 394–416 (NLEV…KNLS), 417–439 (KMRE…ETLK), 440–462 (GLEE…WSLH), 463–485 (HLRV…EGIT), 486–508 (GLEE…WNLR), 509–531 (NVCV…QCLT), 532–554 (GLEE…GNLR), 555–577 (NLKC…DRLV), and 578–599 (NLEK…MELM).

May interact with adenylate cyclase to regulate its activity. Functionally, may be involved in the postranscriptional regulation of genes in VSG expression sites. The protein is Putative adenylate cyclase regulatory protein (ESAG8C) of Trypanosoma equiperdum.